The sequence spans 366 residues: DNA replication and repair protein RecF (366 aa).

An ATP-binding site is contributed by 30–37 (GDNGMGKT).

Belongs to the RecF family.

The protein resides in the cytoplasm. Functionally, the RecF protein is involved in DNA metabolism; it is required for DNA replication and normal SOS inducibility. RecF binds preferentially to single-stranded, linear DNA. It also seems to bind ATP. This chain is DNA replication and repair protein RecF, found in Azobacteroides pseudotrichonymphae genomovar. CFP2.